The sequence spans 78 residues: Large ribosomal subunit protein uL24 (78 aa).

It belongs to the universal ribosomal protein uL24 family. Part of the 50S ribosomal subunit.

One of two assembly initiator proteins, it binds directly to the 5'-end of the 23S rRNA, where it nucleates assembly of the 50S subunit. In terms of biological role, one of the proteins that surrounds the polypeptide exit tunnel on the outside of the subunit. The protein is Large ribosomal subunit protein uL24 of Helicobacter hepaticus (strain ATCC 51449 / 3B1).